Here is a 291-residue protein sequence, read N- to C-terminus: 3-hydroxy-5-phosphonooxypentane-2,4-dione thiolase (291 aa).

Lysine 203 functions as the Schiff-base intermediate with substrate in the catalytic mechanism.

It belongs to the DeoC/FbaB aldolase family. As to quaternary structure, homodecamer.

It is found in the cytoplasm. The enzyme catalyses dihydroxyacetone phosphate + acetyl-CoA = 3-hydroxy-2,4-dioxopentyl phosphate + CoA. Functionally, involved in the degradation of phospho-AI-2, thereby terminating induction of the lsr operon and closing the AI-2 signaling cycle. Catalyzes the transfer of an acetyl moiety from 3-hydroxy-5-phosphonooxypentane-2,4-dione to CoA to form glycerone phosphate and acetyl-CoA. The sequence is that of 3-hydroxy-5-phosphonooxypentane-2,4-dione thiolase from Escherichia coli (strain K12 / DH10B).